The sequence spans 363 residues: Probable dual-specificity RNA methyltransferase RlmN (363 aa).

Residue E99 is the Proton acceptor of the active site. The 237-residue stretch at 105–341 folds into the Radical SAM core domain; it reads SENRMTACVS…VTVRKSHGAS (237 aa). A disulfide bridge links C112 with C346. [4Fe-4S] cluster-binding residues include C119, C123, and C126. Residues 171 to 172, S204, 227 to 229, and N303 each bind S-adenosyl-L-methionine; these read GE and SLH. The active-site S-methylcysteine intermediate is the C346.

This sequence belongs to the radical SAM superfamily. RlmN family. The cofactor is [4Fe-4S] cluster.

It localises to the cytoplasm. It carries out the reaction adenosine(2503) in 23S rRNA + 2 reduced [2Fe-2S]-[ferredoxin] + 2 S-adenosyl-L-methionine = 2-methyladenosine(2503) in 23S rRNA + 5'-deoxyadenosine + L-methionine + 2 oxidized [2Fe-2S]-[ferredoxin] + S-adenosyl-L-homocysteine. The catalysed reaction is adenosine(37) in tRNA + 2 reduced [2Fe-2S]-[ferredoxin] + 2 S-adenosyl-L-methionine = 2-methyladenosine(37) in tRNA + 5'-deoxyadenosine + L-methionine + 2 oxidized [2Fe-2S]-[ferredoxin] + S-adenosyl-L-homocysteine. In terms of biological role, specifically methylates position 2 of adenine 2503 in 23S rRNA and position 2 of adenine 37 in tRNAs. The sequence is that of Probable dual-specificity RNA methyltransferase RlmN from Chlorobium phaeobacteroides (strain DSM 266 / SMG 266 / 2430).